The primary structure comprises 602 residues: Sodium- and chloride-dependent GABA transporter 2 (602 aa).

At 1 to 40 (MDNRVSGTTSNGETKPVCPVMEKVEEDGTLEREQWTNKME) the chain is on the cytoplasmic side. The next 3 membrane-spanning stretches (helical) occupy residues 41-61 (FVLS…FPYL), 68-88 (GAFF…VFFL), and 121-141 (IVSL…FYLF). The Extracellular portion of the chain corresponds to 142 to 206 (SSFTTDLPWG…GIQHLGSLRW (65 aa)). Cys153 and Cys162 are oxidised to a cystine. Residues Asn169, Asn173, and Asn178 are each glycosylated (N-linked (GlcNAc...) asparagine). Transmembrane regions (helical) follow at residues 207-227 (ELVL…WKGV) and 233-253 (VVYF…IRGV). A glycan (N-linked (GlcNAc...) asparagine) is linked at Asn269. The next 7 membrane-spanning stretches (helical) occupy residues 282–302 (AGTQ…ALGS), 319–339 (ILNS…LGFM), 366–386 (VVML…VVLL), 418–438 (ILIL…LTEG), 453–473 (GMCL…VYGA), 490–510 (PLIK…TFLF), and 528–548 (WWGD…IPAW). Residues 549-602 (SIYKLRTLKGPLRERLRQLVCPAEDLPQKSQPELTSPATPMTSLLRLTELESNC) lie on the Cytoplasmic side of the membrane. Thr587 is subject to Phosphothreonine. Ser591 is subject to Phosphoserine.

Belongs to the sodium:neurotransmitter symporter (SNF) (TC 2.A.22) family. SLC6A13 subfamily. In terms of tissue distribution, brain, retina, and peripheral tissues. Expressed in hepatocytes (at protein level).

It is found in the cell membrane. It localises to the basolateral cell membrane. The enzyme catalyses 4-aminobutanoate(out) + chloride(out) + 2 Na(+)(out) = 4-aminobutanoate(in) + chloride(in) + 2 Na(+)(in). It catalyses the reaction taurine(out) + chloride(out) + 2 Na(+)(out) = taurine(in) + chloride(in) + 2 Na(+)(in). The catalysed reaction is beta-alanine(out) + chloride(out) + 2 Na(+)(out) = beta-alanine(in) + chloride(in) + 2 Na(+)(in). It carries out the reaction hypotaurine(out) + chloride(out) + 2 Na(+)(out) = hypotaurine(in) + chloride(in) + 2 Na(+)(in). Its activity is regulated as follows. GABA transport is inhibited by beta-alanine, L-2,4-Diaminobutyric acid, hypotaurine and nipecotic acid. Taurine transport is inhibited by hypotaurine, beta-alanine and nipecotic acid. Its function is as follows. Mediates sodium- and chloride-dependent transport of gamma-aminobutyric acid (GABA). Mediates transport of taurine and is the major taurine transporter in hepatocytes. Can also mediate transport of beta-alanine and hypotaurine. The polypeptide is Sodium- and chloride-dependent GABA transporter 2 (Slc6a13) (Rattus norvegicus (Rat)).